Reading from the N-terminus, the 410-residue chain is Phosphoglycerate kinase (410 aa).

Residues 19-21 (DLN), arginine 34, 57-60 (HQGK), arginine 114, and arginine 154 contribute to the substrate site. ATP-binding positions include glutamate 332 and 358–361 (GGHS).

It belongs to the phosphoglycerate kinase family. Homodimer.

It localises to the cytoplasm. The enzyme catalyses (2R)-3-phosphoglycerate + ATP = (2R)-3-phospho-glyceroyl phosphate + ADP. It participates in carbohydrate degradation; glycolysis; pyruvate from D-glyceraldehyde 3-phosphate: step 2/5. The protein is Phosphoglycerate kinase (pgk) of Pyrococcus furiosus (strain ATCC 43587 / DSM 3638 / JCM 8422 / Vc1).